We begin with the raw amino-acid sequence, 249 residues long: UPF0246 protein Lreu_0493 (249 aa).

Belongs to the UPF0246 family.

In Limosilactobacillus reuteri (strain DSM 20016) (Lactobacillus reuteri), this protein is UPF0246 protein Lreu_0493.